The chain runs to 366 residues: Chorismate synthase (366 aa).

The NADP(+) site is built by Arg-48 and Arg-54. Residues 125–127, 238–239, Gly-278, 293–297, and Arg-319 each bind FMN; these read RSS, NA, and KPTSS.

This sequence belongs to the chorismate synthase family. Homotetramer. FMNH2 is required as a cofactor.

It catalyses the reaction 5-O-(1-carboxyvinyl)-3-phosphoshikimate = chorismate + phosphate. Its pathway is metabolic intermediate biosynthesis; chorismate biosynthesis; chorismate from D-erythrose 4-phosphate and phosphoenolpyruvate: step 7/7. Catalyzes the anti-1,4-elimination of the C-3 phosphate and the C-6 proR hydrogen from 5-enolpyruvylshikimate-3-phosphate (EPSP) to yield chorismate, which is the branch point compound that serves as the starting substrate for the three terminal pathways of aromatic amino acid biosynthesis. This reaction introduces a second double bond into the aromatic ring system. In Burkholderia vietnamiensis (strain G4 / LMG 22486) (Burkholderia cepacia (strain R1808)), this protein is Chorismate synthase.